We begin with the raw amino-acid sequence, 557 residues long: MRSDIIKDGYTRTPHRSLLRATGLKDDDFKKPFIGVANSFIEIIPGHFFLNKYSEILKDEIRKNGCVPFEFNTIGVDDGIAMGHEGMLYSLPSREIIANSVETVMNAHALDALVCIPNCDKIVPGMLMGALRVNVPTIFVSGGPMAAGVGAKGEALDLNSAFEAVGAYETKQIDEKELKFIECNACPSGGSCSGMFTANSMNTLCEAMGVALEGNGTVLALTSEREELIRKAARRICEIALDERYQIRNIINEKTIKNAMVVDMAMGGSSNTILHMLAISREAGYPLDIASLNDISRSVPHITKIAPSLPSVHMQDVAKAGGLSAVINEIAKFNSDLLSLDALTVSGESLGDRVKNAEILDESVIHTVQNAYSKVGGLAILFGNLAEQGCVIKAAGIIGSRQFSGKAVCFNSQDEAIKGISKGKVQKGDVVVLRYEGPKGGPGMQEMLSPTSLIVGRGLGADVALITDGRFSGATRGLSIGHVSPEAAEGGMIGLLKDGDIIDIDVDKFSINVRLSDTEIEARRKEWKYAGKPVNSRWLRQYQKLVTNASNGAILEA.

Residue aspartate 78 coordinates Mg(2+). Cysteine 119 contributes to the [2Fe-2S] cluster binding site. Residues aspartate 120 and lysine 121 each coordinate Mg(2+). Position 121 is an N6-carboxylysine (lysine 121). Cysteine 192 contributes to the [2Fe-2S] cluster binding site. Glutamate 446 contributes to the Mg(2+) binding site. Catalysis depends on serine 472, which acts as the Proton acceptor.

This sequence belongs to the IlvD/Edd family. In terms of assembly, homodimer. The cofactor is [2Fe-2S] cluster. Requires Mg(2+) as cofactor.

The catalysed reaction is (2R)-2,3-dihydroxy-3-methylbutanoate = 3-methyl-2-oxobutanoate + H2O. It carries out the reaction (2R,3R)-2,3-dihydroxy-3-methylpentanoate = (S)-3-methyl-2-oxopentanoate + H2O. It participates in amino-acid biosynthesis; L-isoleucine biosynthesis; L-isoleucine from 2-oxobutanoate: step 3/4. It functions in the pathway amino-acid biosynthesis; L-valine biosynthesis; L-valine from pyruvate: step 3/4. Functions in the biosynthesis of branched-chain amino acids. Catalyzes the dehydration of (2R,3R)-2,3-dihydroxy-3-methylpentanoate (2,3-dihydroxy-3-methylvalerate) into 2-oxo-3-methylpentanoate (2-oxo-3-methylvalerate) and of (2R)-2,3-dihydroxy-3-methylbutanoate (2,3-dihydroxyisovalerate) into 2-oxo-3-methylbutanoate (2-oxoisovalerate), the penultimate precursor to L-isoleucine and L-valine, respectively. This chain is Dihydroxy-acid dehydratase, found in Campylobacter fetus subsp. fetus (strain 82-40).